The following is a 468-amino-acid chain: 3-isopropylmalate dehydratase large subunit (468 aa).

C347, C407, and C410 together coordinate [4Fe-4S] cluster. Polar residues predominate over residues 424–441 (SASSSNRNFKGRQGSPSG). The disordered stretch occupies residues 424–443 (SASSSNRNFKGRQGSPSGRT).

It belongs to the aconitase/IPM isomerase family. LeuC type 1 subfamily. As to quaternary structure, heterodimer of LeuC and LeuD. [4Fe-4S] cluster is required as a cofactor.

The catalysed reaction is (2R,3S)-3-isopropylmalate = (2S)-2-isopropylmalate. It participates in amino-acid biosynthesis; L-leucine biosynthesis; L-leucine from 3-methyl-2-oxobutanoate: step 2/4. Catalyzes the isomerization between 2-isopropylmalate and 3-isopropylmalate, via the formation of 2-isopropylmaleate. The chain is 3-isopropylmalate dehydratase large subunit from Prochlorococcus marinus (strain MIT 9215).